Here is a 416-residue protein sequence, read N- to C-terminus: Thyroid hormone receptor alpha (416 aa).

A disordered region spans residues 1–30 (MEPISNVEDPNSSEGDEKRWPDGPKRKRKN). A modulating region spans residues 1–58 (MEPISNVEDPNSSEGDEKRWPDGPKRKRKNSTCSVKSMSALSLSVQGYIPSYLEKDEP). A compositionally biased stretch (basic and acidic residues) spans 15-24 (GDEKRWPDGP). Cysteine 59, cysteine 62, cysteine 76, cysteine 79, cysteine 97, cysteine 103, cysteine 113, and cysteine 116 together coordinate Zn(2+). 2 NR C4-type zinc fingers span residues 59–79 (CVVCGDKATGYHYRCITCEGC) and 97–121 (CKYDGCCIIDKITRNQCQLCRFRKC). The segment at residues 59 to 133 (CVVCGDKATG…VCMAMDLVLD (75 aa)) is a DNA-binding region (nuclear receptor). In terms of domain architecture, NR LBD spans 169–413 (SEWELIRHVT…PPLFLEVFED (245 aa)). 3,3',5-triiodo-L-thyronine is bound by residues arginine 234 and serine 283.

This sequence belongs to the nuclear hormone receptor family. NR1 subfamily.

It is found in the nucleus. Its function is as follows. Nuclear hormone receptor that can act as a repressor or activator of transcription. High affinity receptor for thyroid hormones, including triiodothyronine and thyroxine. The protein is Thyroid hormone receptor alpha (thra1) of Salmo salar (Atlantic salmon).